The primary structure comprises 496 residues: Glycerol kinase (496 aa).

Residue Thr12 participates in ADP binding. Positions 12, 13, and 14 each coordinate ATP. Thr12 is a sn-glycerol 3-phosphate binding site. Arg16 is an ADP binding site. The sn-glycerol 3-phosphate site is built by Arg82, Glu83, and Tyr134. Residues Arg82, Glu83, and Tyr134 each coordinate glycerol. A Phosphohistidine; by HPr modification is found at His230. Asp244 provides a ligand contact to sn-glycerol 3-phosphate. Positions 244 and 245 each coordinate glycerol. ADP contacts are provided by Thr266 and Gly309. ATP is bound by residues Thr266, Gly309, Gln313, and Gly410. ADP is bound by residues Gly410 and Asn414.

It belongs to the FGGY kinase family. As to quaternary structure, homotetramer and homodimer (in equilibrium). The phosphoenolpyruvate-dependent sugar phosphotransferase system (PTS), including enzyme I, and histidine-containing protein (HPr) are required for the phosphorylation, which leads to the activation of the enzyme.

It catalyses the reaction glycerol + ATP = sn-glycerol 3-phosphate + ADP + H(+). It functions in the pathway polyol metabolism; glycerol degradation via glycerol kinase pathway; sn-glycerol 3-phosphate from glycerol: step 1/1. Activated by phosphorylation and inhibited by fructose 1,6-bisphosphate (FBP). In terms of biological role, key enzyme in the regulation of glycerol uptake and metabolism. Catalyzes the phosphorylation of glycerol to yield sn-glycerol 3-phosphate. The sequence is that of Glycerol kinase from Bacillus thuringiensis subsp. konkukian (strain 97-27).